The sequence spans 89 residues: Large ribosomal subunit protein eL34 (89 aa).

It belongs to the eukaryotic ribosomal protein eL34 family.

This chain is Large ribosomal subunit protein eL34 (rpl34e), found in Methanocaldococcus jannaschii (strain ATCC 43067 / DSM 2661 / JAL-1 / JCM 10045 / NBRC 100440) (Methanococcus jannaschii).